Consider the following 119-residue polypeptide: Holo-[acyl-carrier-protein] synthase (119 aa).

Residues aspartate 8 and glutamate 58 each contribute to the Mg(2+) site.

It belongs to the P-Pant transferase superfamily. AcpS family. Requires Mg(2+) as cofactor.

Its subcellular location is the cytoplasm. It carries out the reaction apo-[ACP] + CoA = holo-[ACP] + adenosine 3',5'-bisphosphate + H(+). Functionally, transfers the 4'-phosphopantetheine moiety from coenzyme A to a Ser of acyl-carrier-protein. The polypeptide is Holo-[acyl-carrier-protein] synthase (Bacillus cereus (strain G9842)).